A 128-amino-acid polypeptide reads, in one-letter code: NADH-quinone oxidoreductase subunit A (128 aa).

A run of 3 helical transmembrane segments spans residues 5–25 (IPILVLAALAAAFAVVSVVIA), 72–92 (LTAMLFIVFDIEIVFLYPWAV), and 100–120 (FALVEMAIFMLTVFVAYAYVW).

It belongs to the complex I subunit 3 family. As to quaternary structure, NDH-1 is composed of 14 different subunits. Subunits NuoA, H, J, K, L, M, N constitute the membrane sector of the complex.

It localises to the cell membrane. The enzyme catalyses a quinone + NADH + 5 H(+)(in) = a quinol + NAD(+) + 4 H(+)(out). NDH-1 shuttles electrons from NADH, via FMN and iron-sulfur (Fe-S) centers, to quinones in the respiratory chain. The immediate electron acceptor for the enzyme in this species is believed to be a menaquinone. Couples the redox reaction to proton translocation (for every two electrons transferred, four hydrogen ions are translocated across the cytoplasmic membrane), and thus conserves the redox energy in a proton gradient. The polypeptide is NADH-quinone oxidoreductase subunit A (Mycobacterium bovis (strain ATCC BAA-935 / AF2122/97)).